The sequence spans 83 residues: uncharacterized protein (83 aa).

2 helical membrane-spanning segments follow: residues 23–43 (FSLW…QLIK) and 56–76 (TIFV…CVFL).

Its subcellular location is the cell membrane. This is an uncharacterized protein from Bacillus subtilis (strain 168).